Consider the following 203-residue polypeptide: Endo-type membrane-bound lytic murein transglycosylase A (203 aa).

The signal sequence occupies residues 1-15 (MKLRWFAFLIVLLAG). C16 carries N-palmitoyl cysteine lipidation. A lipid anchor (S-diacylglycerol cysteine) is attached at C16.

The protein belongs to the transglycosylase Slt family.

Its subcellular location is the cell outer membrane. The catalysed reaction is Endolytic cleavage of the (1-&gt;4)-beta-glycosidic linkage between N-acetylmuramic acid (MurNAc) and N-acetylglucosamine (GlcNAc) residues in peptidoglycan with concomitant formation of a 1,6-anhydrobond in the MurNAc residue.. Murein-degrading enzyme. May play a role in recycling of muropeptides during cell elongation and/or cell division. Preferentially cleaves at a distance of more than two disaccharide units from the ends of the glycan chain. This chain is Endo-type membrane-bound lytic murein transglycosylase A, found in Shigella dysenteriae serotype 1 (strain Sd197).